The following is a 2081-amino-acid chain: Non-reducing polyketide synthase terA (2081 aa).

An N-terminal acylcarrier protein transacylase (SAT) domain (SAT) region spans residues 85-190 (TLTLAFRIGV…ISLDIFAPFH (106 aa)). The region spanning 316-749 (AQKIAIVGMA…GGNTGLLLED (434 aa)) is the Ketosynthase family 3 (KS3) domain. Catalysis depends on for beta-ketoacyl synthase activity residues Cys-488, His-623, and His-667. The malonyl-CoA:ACP transacylase (MAT) domain stretch occupies residues 849 to 1147 (LFTGQGSHYT…LTLPSLRKQE (299 aa)). An N-terminal hotdog fold region spans residues 1230 to 1364 (QKVIKEDFGQ…CHVEYGDIKT (135 aa)). One can recognise a PKS/mFAS DH domain in the interval 1230–1539 (QKVIKEDFGQ…FKAIPRAVIN (310 aa)). A product template (PT) domain region spans residues 1259-1536 (VTGHLVNGSA…GVKFKAIPRA (278 aa)). His-1262 acts as the Proton acceptor; for dehydratase activity in catalysis. A C-terminal hotdog fold region spans residues 1392–1539 (YQKLDRKAAY…FKAIPRAVIN (148 aa)). The active-site Proton donor; for dehydratase activity is the Asp-1452. Positions 1549-1578 (KALEKSAPRQNPKATATKTTQKPQAPVPVP) are disordered. Low complexity predominate over residues 1558–1572 (QNPKATATKTTQKPQ). A Carrier 1 domain is found at 1580–1658 (KQNKAIIDDF…QVKELILKLA (79 aa)). Residue Ser-1617 is modified to O-(pantetheine 4'-phosphoryl)serine. The segment at 1659–1700 (GSSSDENTTDTPDEEEDPATADADNTEMIRENPLESVSPNVS) is disordered. The segment covering 1665–1677 (NTTDTPDEEEDPA) has biased composition (acidic residues). The 78-residue stretch at 1699 to 1776 (VSSSEAMDGF…QARLAIASLM (78 aa)) folds into the Carrier 2 domain. Ser-1736 is modified (O-(pantetheine 4'-phosphoryl)serine). The tract at residues 1783-1809 (GATTPYSGSDDAKSSTSSLTAGSVLTP) is disordered. The thioesterase (TE) domain stretch occupies residues 1840–2070 (TLFLLPDGSG…TMMREPKVNQ (231 aa)).

It catalyses the reaction 3 malonyl-CoA + acetyl-CoA + 2 H(+) = orsellinate + 3 CO2 + 4 CoA. It participates in secondary metabolite biosynthesis. In terms of biological role, non-reducing polyketide synthase; part of the gene cluster that mediates the biosynthesis of terrein, a fungal metabolite with ecological, antimicrobial, antiproliferative, and antioxidative activities. The first step in the pathway is performed by the polyketide synthase terA that produces 4-hydroxy-6-methylpyranon (4-HMP), orsellinic acid (OA), and 2,3-dehydro-6-hydroxymellein (2,3-dehydro-6-HM) by condensing acetyl-CoA with two, three, or four malonyl-CoA units, respectively. 4-HMP and OA are not pathway intermediates, but are rather shunt or side products. 2,3-dehydro-6-HM is further converted to 6-hydroxymellein (6-HM) by the 6-hydroxymellein synthase terB. The monooxygenases terC and terD, the multicopper oxidase terE and the Kelch-like protein terF are then involved in the transformation of 6-HM to terrein. Even if they are co-regulated with the other terrein cluster genes, terH and terI seem to be dispensable for terrein production; whereas one or both of the 2 transporters terG and terJ are probably required for efficient secretion of metabolites. This chain is Non-reducing polyketide synthase terA, found in Aspergillus terreus (strain NIH 2624 / FGSC A1156).